Reading from the N-terminus, the 634-residue chain is 1-deoxy-D-xylulose-5-phosphate synthase (634 aa).

Thiamine diphosphate-binding positions include His-79 and 120-122 (GHA). Asp-151 provides a ligand contact to Mg(2+). Thiamine diphosphate is bound by residues 152–153 (GS), Asn-180, Tyr-292, and Glu-376. Residue Asn-180 participates in Mg(2+) binding.

Belongs to the transketolase family. DXPS subfamily. In terms of assembly, homodimer. Mg(2+) serves as cofactor. Requires thiamine diphosphate as cofactor.

The catalysed reaction is D-glyceraldehyde 3-phosphate + pyruvate + H(+) = 1-deoxy-D-xylulose 5-phosphate + CO2. It functions in the pathway metabolic intermediate biosynthesis; 1-deoxy-D-xylulose 5-phosphate biosynthesis; 1-deoxy-D-xylulose 5-phosphate from D-glyceraldehyde 3-phosphate and pyruvate: step 1/1. Catalyzes the acyloin condensation reaction between C atoms 2 and 3 of pyruvate and glyceraldehyde 3-phosphate to yield 1-deoxy-D-xylulose-5-phosphate (DXP). The sequence is that of 1-deoxy-D-xylulose-5-phosphate synthase from Porphyromonas gingivalis (strain ATCC BAA-308 / W83).